The primary structure comprises 78 residues: Omega-conotoxin-like 2 (78 aa).

The first 22 residues, 1-22 (MKLTCVVIVAVLLLTACQLITA), serve as a signal peptide directing secretion. Positions 23-42 (DDSRGTQKHRSLRSTTKVSK) are excised as a propeptide. Intrachain disulfides connect cysteine 46–cysteine 62, cysteine 53–cysteine 65, and cysteine 61–cysteine 72.

It belongs to the conotoxin O1 superfamily. As to expression, expressed by the venom duct.

The protein localises to the secreted. Functionally, omega-conotoxins act at presynaptic membranes, they bind and block voltage-gated calcium channels (Cav). This Conus striatus (Striated cone) protein is Omega-conotoxin-like 2.